Reading from the N-terminus, the 343-residue chain is Holliday junction branch migration complex subunit RuvB (343 aa).

Positions 1 to 186 (MTEEFDIRQE…FGINLHLEYY (186 aa)) are large ATPase domain (RuvB-L). Residues Leu-25, Arg-26, Gly-67, Lys-70, Thr-71, Thr-72, 133 to 135 (EDY), Arg-176, Tyr-186, and Arg-223 contribute to the ATP site. Residue Thr-71 coordinates Mg(2+). The small ATPAse domain (RuvB-S) stretch occupies residues 187-257 (DVHTITGIVE…IACYALEALN (71 aa)). Residues 260–343 (RYGLDNVDHK…PRPHRPSLFD (84 aa)) form a head domain (RuvB-H) region. DNA contacts are provided by Arg-315 and Arg-320.

It belongs to the RuvB family. Homohexamer. Forms an RuvA(8)-RuvB(12)-Holliday junction (HJ) complex. HJ DNA is sandwiched between 2 RuvA tetramers; dsDNA enters through RuvA and exits via RuvB. An RuvB hexamer assembles on each DNA strand where it exits the tetramer. Each RuvB hexamer is contacted by two RuvA subunits (via domain III) on 2 adjacent RuvB subunits; this complex drives branch migration. In the full resolvosome a probable DNA-RuvA(4)-RuvB(12)-RuvC(2) complex forms which resolves the HJ.

It is found in the cytoplasm. It carries out the reaction ATP + H2O = ADP + phosphate + H(+). Its function is as follows. The RuvA-RuvB-RuvC complex processes Holliday junction (HJ) DNA during genetic recombination and DNA repair, while the RuvA-RuvB complex plays an important role in the rescue of blocked DNA replication forks via replication fork reversal (RFR). RuvA specifically binds to HJ cruciform DNA, conferring on it an open structure. The RuvB hexamer acts as an ATP-dependent pump, pulling dsDNA into and through the RuvAB complex. RuvB forms 2 homohexamers on either side of HJ DNA bound by 1 or 2 RuvA tetramers; 4 subunits per hexamer contact DNA at a time. Coordinated motions by a converter formed by DNA-disengaged RuvB subunits stimulates ATP hydrolysis and nucleotide exchange. Immobilization of the converter enables RuvB to convert the ATP-contained energy into a lever motion, pulling 2 nucleotides of DNA out of the RuvA tetramer per ATP hydrolyzed, thus driving DNA branch migration. The RuvB motors rotate together with the DNA substrate, which together with the progressing nucleotide cycle form the mechanistic basis for DNA recombination by continuous HJ branch migration. Branch migration allows RuvC to scan DNA until it finds its consensus sequence, where it cleaves and resolves cruciform DNA. This Porphyromonas gingivalis (strain ATCC BAA-308 / W83) protein is Holliday junction branch migration complex subunit RuvB.